The chain runs to 328 residues: Interleukin-12 subunit beta (328 aa).

The first 22 residues, 1–22, serve as a signal peptide directing secretion; that stretch reads MCHQQLVISWFSLVFLASPLVA. One can recognise an Ig-like C2-type domain in the interval 23-106; sequence IWELKKDVYV…LSHSLLLLHK (84 aa). Cystine bridges form between Cys50/Cys90, Cys131/Cys142, and Cys170/Cys193. N-linked (GlcNAc...) asparagine glycosylation occurs at Asn135. N-linked (GlcNAc...) asparagine glycosylation occurs at Asn222. The Fibronectin type-III domain occupies 237–328; the sequence is PPKNLQLKPL…WSEWASVPCS (92 aa). Residues Cys300 and Cys327 are joined by a disulfide bond. Trp319 is a glycosylation site (C-linked (Man) tryptophan).

It belongs to the IL-12B family. In terms of assembly, heterodimer with IL12A; disulfide-linked. The heterodimer is known as interleukin IL-12. Heterodimer with IL23A; disulfide-linked. The heterodimer is known as interleukin IL-23. Also secreted as a monomer. Interacts with NBR1; this interaction promotes IL-12 secretion. Known to be C-mannosylated in the recombinant protein; it is not yet known for sure if the wild-type protein is also modified.

Its subcellular location is the secreted. In terms of biological role, cytokine that can act as a growth factor for activated T and NK cells, enhance the lytic activity of NK/lymphokine-activated killer cells, and stimulate the production of IFN-gamma by resting PBMC. Its function is as follows. Associates with IL23A to form the IL-23 interleukin, a heterodimeric cytokine which functions in innate and adaptive immunity. IL-23 may constitute with IL-17 an acute response to infection in peripheral tissues. IL-23 binds to a heterodimeric receptor complex composed of IL12RB1 and IL23R, activates the Jak-Stat signaling cascade, stimulates memory rather than naive T-cells and promotes production of pro-inflammatory cytokines. IL-23 induces autoimmune inflammation and thus may be responsible for autoimmune inflammatory diseases and may be important for tumorigenesis. The chain is Interleukin-12 subunit beta (IL12B) from Homo sapiens (Human).